A 119-amino-acid polypeptide reads, in one-letter code: MORF4 family associated protein 1 like 2 (119 aa).

A compositionally biased stretch (basic and acidic residues) spans 1 to 16 (MRPVDADEAREPREEP). Positions 1–36 (MRPVDADEAREPREEPGSPLSPAPRAGRENLASLER) are disordered.

Belongs to the MORF4 family-associated protein family. In terms of assembly, may interact with CDK2AP1.

Functionally, may play a role in cell proliferation. This is MORF4 family associated protein 1 like 2 from Homo sapiens (Human).